A 436-amino-acid chain; its full sequence is Histone acetyltransferase RTT109 (436 aa).

The Rtt109-type HAT domain maps to 2-404 (SLNDFLSSVL…LQSLTGKREH (403 aa)). Acetyl-CoA is bound by residues 88–90 (ADT) and 97–101 (RVSVR). Residues 128-170 (RSYKKISPELISAASTPARTLRILARRLKQSGSTVLKEIESPR) form an interaction with VPS75 region. Residues Phe-192, Ala-196, 211–213 (HIL), and Trp-221 contribute to the acetyl-CoA site. Residue Asp-288 is the Proton donor/acceptor of the active site. Lys-290 is modified (N6-acetyllysine; by autocatalysis). The interval 419 to 433 (LAITMLKPRKKAKAL) is interaction with ASF1.

Belongs to the RTT109 family. As to quaternary structure, forms a complex composed of two RTT109 subunits and one VPS75 homodimer; each RTT109 subunit interacts predominantly with VPS75 instead of interacting with the other RTT109 subunit. Interacts with VPS75; the interaction is direct. Interacts (via C-terminus) with ASF1; the interaction is direct. Interacts with histone H3/H4 heterodimers via histone H3.

The protein localises to the nucleus. It catalyses the reaction L-lysyl-[histone] + acetyl-CoA = N(6)-acetyl-L-lysyl-[histone] + CoA + H(+). The catalysed reaction is L-lysyl-[protein] + acetyl-CoA = N(6)-acetyl-L-lysyl-[protein] + CoA + H(+). Functionally, histone chaperone-dependent acetylase that modifies 'Lys-9', 'Lys-14', 'Lys-23', 'Lys-27', and 'Lys-56' on histone H3 (H3K9Ac, H3K14Ac and H3K23Ac, H3K27Ac, and H3K56Ac) to promote nucleosome assembly, genomic stability, DNA repair and transcriptional regulation during mitotic S-phase. Its residue selectivity is influenced by the acetylation status of histone H3, and also the presence of histone chaperone ASF1 that shifts selectivity to 'Lys-56' when H3K14Ac is already present. H3K56 acetylation weakens the interaction between the histone core and the surrounding DNA in the nucleosomal particle and drives chromatin disassembly. Autoacetylates. Independently of acetyltransferase activity, stimulates histone deposition by VPS75. Involved in regulation of Ty1 transposition. This chain is Histone acetyltransferase RTT109, found in Saccharomyces cerevisiae (strain ATCC 204508 / S288c) (Baker's yeast).